The primary structure comprises 268 residues: Tryptophan synthase alpha chain (268 aa).

Active-site proton acceptor residues include glutamate 49 and aspartate 60.

This sequence belongs to the TrpA family. In terms of assembly, tetramer of two alpha and two beta chains.

It catalyses the reaction (1S,2R)-1-C-(indol-3-yl)glycerol 3-phosphate + L-serine = D-glyceraldehyde 3-phosphate + L-tryptophan + H2O. It functions in the pathway amino-acid biosynthesis; L-tryptophan biosynthesis; L-tryptophan from chorismate: step 5/5. Functionally, the alpha subunit is responsible for the aldol cleavage of indoleglycerol phosphate to indole and glyceraldehyde 3-phosphate. The chain is Tryptophan synthase alpha chain from Escherichia coli (strain SMS-3-5 / SECEC).